The chain runs to 289 residues: ATP synthase subunit gamma, mitochondrial (289 aa).

It belongs to the ATPase gamma chain family. In terms of assembly, F-type ATPases have 2 components, CF(1) - the catalytic core - and CF(0) - the membrane proton channel. CF(1) has five subunits: alpha(3), beta(3), gamma(1), delta(1), epsilon(1). CF(0) has three main subunits: a, b and c.

Its subcellular location is the mitochondrion. It localises to the mitochondrion inner membrane. Mitochondrial membrane ATP synthase (F(1)F(0) ATP synthase or Complex V) produces ATP from ADP in the presence of a proton gradient across the membrane which is generated by electron transport complexes of the respiratory chain. F-type ATPases consist of two structural domains, F(1) - containing the extramembraneous catalytic core, and F(0) - containing the membrane proton channel, linked together by a central stalk and a peripheral stalk. During catalysis, ATP synthesis in the catalytic domain of F(1) is coupled via a rotary mechanism of the central stalk subunits to proton translocation. Part of the complex F(1) domain and the central stalk which is part of the complex rotary element. The gamma subunit protrudes into the catalytic domain formed of alpha(3)beta(3). Rotation of the central stalk against the surrounding alpha(3)beta(3) subunits leads to hydrolysis of ATP in three separate catalytic sites on the beta subunits. The protein is ATP synthase subunit gamma, mitochondrial (ATP3) of Kluyveromyces lactis (strain ATCC 8585 / CBS 2359 / DSM 70799 / NBRC 1267 / NRRL Y-1140 / WM37) (Yeast).